The sequence spans 277 residues: Phosphatidylglycerol--prolipoprotein diacylglyceryl transferase (277 aa).

4 consecutive transmembrane segments (helical) span residues Leu16–Trp36, Phe58–Tyr78, Ile93–Leu113, and Gly119–Leu139. Arg141 lines the a 1,2-diacyl-sn-glycero-3-phospho-(1'-sn-glycerol) pocket. The next 3 helical transmembrane spans lie at Ala182 to Val202, Gly207 to Phe227, and Phe239 to Leu259.

Belongs to the Lgt family.

The protein localises to the cell inner membrane. The catalysed reaction is L-cysteinyl-[prolipoprotein] + a 1,2-diacyl-sn-glycero-3-phospho-(1'-sn-glycerol) = an S-1,2-diacyl-sn-glyceryl-L-cysteinyl-[prolipoprotein] + sn-glycerol 1-phosphate + H(+). Its pathway is protein modification; lipoprotein biosynthesis (diacylglyceryl transfer). In terms of biological role, catalyzes the transfer of the diacylglyceryl group from phosphatidylglycerol to the sulfhydryl group of the N-terminal cysteine of a prolipoprotein, the first step in the formation of mature lipoproteins. The chain is Phosphatidylglycerol--prolipoprotein diacylglyceryl transferase from Rhodospirillum centenum (strain ATCC 51521 / SW).